A 229-amino-acid chain; its full sequence is Orotidine 5'-phosphate decarboxylase (229 aa).

Residues Asp-10, Lys-32, 59-68 (DLKFHDIPNT), Thr-119, Arg-180, Gln-189, Gly-209, and Arg-210 contribute to the substrate site. The Proton donor role is filled by Lys-61.

The protein belongs to the OMP decarboxylase family. Type 1 subfamily. Homodimer.

The catalysed reaction is orotidine 5'-phosphate + H(+) = UMP + CO2. Its pathway is pyrimidine metabolism; UMP biosynthesis via de novo pathway; UMP from orotate: step 2/2. Functionally, catalyzes the decarboxylation of orotidine 5'-monophosphate (OMP) to uridine 5'-monophosphate (UMP). The polypeptide is Orotidine 5'-phosphate decarboxylase (Legionella pneumophila (strain Corby)).